The following is a 68-amino-acid chain: Alpha-conotoxin Lp1.1 (68 aa).

The N-terminal stretch at 1-21 is a signal peptide; it reads MGMRMMFIMFMLVVLATTVVT. The propeptide occupies 22-48; it reads FTSDRALDAMNAAASNKASRLIALAVR. Intrachain disulfides connect C50-C56 and C51-C64. The lacks the Ser-Xaa-Pro motif that is crucial for potent interaction with nAChR stretch occupies residues 52–54; it reads ARA. Position 65 is a glycine amide (G65). A propeptide spanning residues 66 to 68 is cleaved from the precursor; sequence GGR.

The protein belongs to the conotoxin A superfamily. Expressed by the venom duct.

The protein resides in the secreted. Functionally, alpha-conotoxins act on postsynaptic membranes, they bind to the nicotinic acetylcholine receptors (nAChR) and thus inhibit them. Synthetic peptide inhibits alpha-6/alpha-3/beta-2 and alpha-3/beta-2 nicotinic acetylcholine receptors and causes uncoordinated movement when intramuscularly injected into goldfish. Has a distinct nAChR binding mode from other alpha-conotoxins, due to a different three residue motif (Ala-Xaa-Ala instead of the conserved Ser-Xaa-Pro motif). In Conus leopardus (Leopard cone), this protein is Alpha-conotoxin Lp1.1.